The chain runs to 285 residues: MDYEASRIVEMVEDEEHIDLPPGFRFHPTDEELITHYLKPKVFNTFFSATAIGEVDLNKIEPWDLPWKAKMGEKEWYFFCVRDRKYPTGLRTNRATEAGYWKATGKDKEIFKGKSLVGMKKTLVFYKGRAPKGVKTNWVMHEYRLEGKYCIENLPQTAKNEWVICRVFQKRADGTKVPMSMLDPHINRMEPAGLPSLMDCSQRDSFTGSSSHVTCFSDQETEDKRLVHESKDGFGSLFYSDPLFLQDNYSLMKLLLDGQETQFSGKPFDGRDSSGTEELDCVWNF.

Residues 20–170 form the NAC domain; sequence LPPGFRFHPT…EWVICRVFQK (151 aa). Residues 117 to 176 mediate DNA binding; that stretch reads VGMKKTLVFYKGRAPKGVKTNWVMHEYRLEGKYCIENLPQTAKNEWVICRVFQKRADGTK.

As to quaternary structure, forms homodimers. Interacts with GLK1 and GLK2. Interacts with NLA. In terms of processing, ubiquitinated by NLA. Ubiquitination of NAC92 leads to its degradation by the proteasome during leaf senescence under nitrogen deficiency. As to expression, mostly expressed in roots and flowers, and, to a lower extent, in shoots and leaves. Particularly expressed in old and senescing tissues.

It is found in the nucleus. Its function is as follows. Transcription activator that binds to DNA in promoters of target genes on a specific bipartite motif 5'-[ACG][CA]GT[AG](5-6n)[CT]AC[AG]-3'. Promotes lateral root development. Triggers the expression of senescence-associated genes during age-, salt- and dark-induced senescence through a regulatory network that may involve cross-talk with salt- and H(2)O(2)-dependent signaling pathways. Also regulates genes during seed germination. Positively regulates aging-induced cell death. Involved in age-related resistance (ARR) against Pseudomonas syringae pv. tomato and Hyaloperonospora arabidopsidis. Antagonizes GLK1 and GLK2 transcriptional activity, shifting the balance from chloroplast maintenance towards deterioration during leaf senescence. Promotes the expression of senescence-associated genes, including ENDO1/BFN1, SWEET15/SAG29 and SINA1/At3g13672, during senescence onset. This Arabidopsis thaliana (Mouse-ear cress) protein is NAC domain-containing protein 92.